The following is a 741-amino-acid chain: NAD(P)H-quinone oxidoreductase subunit 5, chloroplastic (741 aa).

The next 16 membrane-spanning stretches (helical) occupy residues 9–29 (WIIP…LLLF), 40–60 (WAFQ…NLSI), 89–109 (IDPL…MVLI), 125–145 (FAYM…SNLI), 147–167 (IYIF…FWFT), 185–205 (GDFG…SFEF), 219–239 (NEVN…GAIA), 258–278 (TPIS…FLVA), 284–304 (FIVI…TVFF), 327–347 (LGYM…FHLI), 354–374 (ALLF…VGYC), 396–416 (NSFL…CFWS), 425–445 (WLYS…TAFY), 549–569 (LFPI…GIPF), 605–625 (VFSV…YKPV), and 721–741 (YLFF…FLNF).

This sequence belongs to the complex I subunit 5 family. NDH is composed of at least 16 different subunits, 5 of which are encoded in the nucleus.

It localises to the plastid. The protein resides in the chloroplast thylakoid membrane. It catalyses the reaction a plastoquinone + NADH + (n+1) H(+)(in) = a plastoquinol + NAD(+) + n H(+)(out). The enzyme catalyses a plastoquinone + NADPH + (n+1) H(+)(in) = a plastoquinol + NADP(+) + n H(+)(out). Its function is as follows. NDH shuttles electrons from NAD(P)H:plastoquinone, via FMN and iron-sulfur (Fe-S) centers, to quinones in the photosynthetic chain and possibly in a chloroplast respiratory chain. The immediate electron acceptor for the enzyme in this species is believed to be plastoquinone. Couples the redox reaction to proton translocation, and thus conserves the redox energy in a proton gradient. The chain is NAD(P)H-quinone oxidoreductase subunit 5, chloroplastic (ndhF) from Flaveria ramosissima (Yellowtops).